A 624-amino-acid polypeptide reads, in one-letter code: MEIPGSLCKKVKLSNNAQNWGMQRATNVTYQAHHVSRNKRGQVVGTRGGFRGCTVWLTGLSGAGKTTVSMALEEYLVCHGIPCYTLDGDNIRQGLNKNLGFSPEDREENVRRIAEVAKLFADAGLVCITSFISPYTQDRNNARQIHEGASLPFFEVFVDAPLHVCEQRDVKGLYKKARAGEIKGFTGIDSEYEKPEAPELVLKTDSCDVNDCVQQVVELLQERDIVPVDASYEVKELYVPENKLHLAKTDAETLPALKINKVDMQWVQVLAEGWATPLNGFMREREYLQCLHFDCLLDGGVINLSVPIVLTATHEDKERLDGCTAFALMYEGRRVAILRNPEFFEHRKEERCARQWGTTCKNHPYIKMVMEQGDWLIGGDLQVLDRVYWNDGLDQYRLTPTELKQKFKDMNADAVFAFQLRNPVHNGHALLMQDTHKQLLERGYRRPVLLLHPLGGWTKDDDVPLMWRMKQHAAVLEEGVLNPETTVVAIFPSPMMYAGPTEVQWHCRARMVAGANFYIVGRDPAGMPHPETGKDLYEPSHGAKVLTMAPGLITLEIVPFRVAAYNKKKKRMDYYDSEHHEDFEFISGTRMRKLAREGQKPPEGFMAPKAWTVLTEYYKSLEKA.

Residue Met-1 is modified to N-acetylmethionine. The interval 1–225 (MEIPGSLCKK…VVELLQERDI (225 aa)) is adenylyl-sulfate kinase. Position 12 is an N6-acetyllysine (Lys-12). 62-67 (GAGKTT) is an ATP binding site. Adenosine 5'-phosphosulfate is bound by residues 89–92 (DNIR), Phe-101, 106–109 (REEN), 132–133 (IS), Lys-171, and 184–185 (GF). ATP is bound by residues Cys-207, Cys-212, 419–422 (QLRN), 521–525 (GRDPA), and Ala-563. The sulfate adenylyltransferase stretch occupies residues 234-624 (VKELYVPENK…TEYYKSLEKA (391 aa)).

This sequence in the N-terminal section; belongs to the APS kinase family. In the C-terminal section; belongs to the sulfate adenylyltransferase family. As to quaternary structure, homodimer. Expressed in testis, pancreas, kidney, thymus, prostate, ovary, small intestine, colon, leukocytes and liver. Also expressed in high endothelial venules (HEV) cells and in cartilage.

The catalysed reaction is sulfate + ATP + H(+) = adenosine 5'-phosphosulfate + diphosphate. The enzyme catalyses adenosine 5'-phosphosulfate + ATP = 3'-phosphoadenylyl sulfate + ADP + H(+). It participates in sulfur metabolism; sulfate assimilation. Inhibited by chlorate. The kinase activity is subject to inhibition by the substrate adenylyl sulfate. Bifunctional enzyme with both ATP sulfurylase and APS kinase activity, which mediates two steps in the sulfate activation pathway. The first step is the transfer of a sulfate group to ATP to yield adenosine 5'-phosphosulfate (APS), and the second step is the transfer of a phosphate group from ATP to APS yielding 3'-phosphoadenylylsulfate (PAPS: activated sulfate donor used by sulfotransferase). In mammals, PAPS is the sole source of sulfate; APS appears to be only an intermediate in the sulfate-activation pathway. Required for normal biosynthesis of sulfated L-selectin ligands in endothelial cells. The protein is Bifunctional 3'-phosphoadenosine 5'-phosphosulfate synthase 1 (PAPSS1) of Homo sapiens (Human).